The following is a 184-amino-acid chain: NADH-quinone oxidoreductase subunit B (184 aa).

The [4Fe-4S] cluster site is built by Cys37, Cys38, Cys103, and Cys132.

Belongs to the complex I 20 kDa subunit family. As to quaternary structure, NDH-1 is composed of 14 different subunits. Subunits NuoB, C, D, E, F, and G constitute the peripheral sector of the complex. It depends on [4Fe-4S] cluster as a cofactor.

The protein resides in the cell membrane. It carries out the reaction a quinone + NADH + 5 H(+)(in) = a quinol + NAD(+) + 4 H(+)(out). NDH-1 shuttles electrons from NADH, via FMN and iron-sulfur (Fe-S) centers, to quinones in the respiratory chain. The immediate electron acceptor for the enzyme in this species is believed to be a menaquinone. Couples the redox reaction to proton translocation (for every two electrons transferred, four hydrogen ions are translocated across the cytoplasmic membrane), and thus conserves the redox energy in a proton gradient. The chain is NADH-quinone oxidoreductase subunit B from Mycolicibacterium smegmatis (strain ATCC 700084 / mc(2)155) (Mycobacterium smegmatis).